A 284-amino-acid polypeptide reads, in one-letter code: Putative ribosome biogenesis protein C306.07c (284 aa).

Residues 264-284 form a disordered region; it reads LKKSELRAQKRGSSGEGKGNK.

It belongs to the universal ribosomal protein uL1 family. Highly divergent. Component of the 90S pre-ribosomes.

It is found in the nucleus. The protein resides in the nucleolus. In terms of biological role, involved in rRNA-processing and ribosome biosynthesis. This is Putative ribosome biogenesis protein C306.07c from Schizosaccharomyces pombe (strain 972 / ATCC 24843) (Fission yeast).